The primary structure comprises 117 residues: Ribulose bisphosphate carboxylase small subunit 1 (117 aa).

This sequence belongs to the RuBisCO small chain family. In terms of assembly, heterohexadecamer of 8 large and 8 small subunits.

Functionally, ruBisCO catalyzes two reactions: the carboxylation of D-ribulose 1,5-bisphosphate, the primary event in carbon dioxide fixation, as well as the oxidative fragmentation of the pentose substrate. Both reactions occur simultaneously and in competition at the same active site. Although the small subunit is not catalytic it is essential for maximal activity. The polypeptide is Ribulose bisphosphate carboxylase small subunit 1 (Hydrogenovibrio marinus).